Here is a 150-residue protein sequence, read N- to C-terminus: Peptide deformylase 2 (150 aa).

Residues Cys89 and His131 each contribute to the Fe cation site. The active site involves Glu132. His135 lines the Fe cation pocket.

Belongs to the polypeptide deformylase family. The cofactor is Fe(2+).

It carries out the reaction N-terminal N-formyl-L-methionyl-[peptide] + H2O = N-terminal L-methionyl-[peptide] + formate. In terms of biological role, removes the formyl group from the N-terminal Met of newly synthesized proteins. Requires at least a dipeptide for an efficient rate of reaction. N-terminal L-methionine is a prerequisite for activity but the enzyme has broad specificity at other positions. This chain is Peptide deformylase 2, found in Clostridium acetobutylicum (strain ATCC 824 / DSM 792 / JCM 1419 / IAM 19013 / LMG 5710 / NBRC 13948 / NRRL B-527 / VKM B-1787 / 2291 / W).